Consider the following 146-residue polypeptide: Large ribosomal subunit protein uL11 (146 aa).

Belongs to the universal ribosomal protein uL11 family. As to quaternary structure, part of the ribosomal stalk of the 50S ribosomal subunit. Interacts with L10 and the large rRNA to form the base of the stalk. L10 forms an elongated spine to which L12 dimers bind in a sequential fashion forming a multimeric L10(L12)X complex. One or more lysine residues are methylated.

Its function is as follows. Forms part of the ribosomal stalk which helps the ribosome interact with GTP-bound translation factors. In Salinibacter ruber (strain DSM 13855 / M31), this protein is Large ribosomal subunit protein uL11.